The sequence spans 272 residues: MSDQQLDCALDLMRRLPPQQIEKNLSDLIDLVPSLCEDLLSSVDQPLKIARDKVVGKDYLLCDYNRDGDSYRSPWSNKYDPPLEDGAMPSARLRKLEVEANNAFDQYRDLYFEGGVSSVYLWDLDHGFAGVILIKKAGDGSKKIKGCWDSIHVVEVQEKSSGRTAHYKLTSTVMLWLQTNKSGSGTMNLGGSLTRQMEKDETVSDCSPHIANIGRLVEDMENKIRSTLNEIYFGKTKDIVNGLRSVQTFADKSKQEALKNDLVEALKRKQQC.

N-acetylserine is present on Ser2. Ser2 is subject to Phosphoserine. Residue Lys235 is modified to N6-acetyllysine. Val263 is modified (phosphoserine).

The protein belongs to the F-actin-capping protein beta subunit family. Component of the F-actin capping complex, composed of a heterodimer of an alpha and a beta subunit. Subunit of dynactin, a multiprotein complex part of a tripartite complex with dynein and a adapter, such as BICDL1, BICD2 or HOOK3. The dynactin complex is built around ACTR1A/ACTB filament and consists of an actin-related filament composed of a shoulder domain, a pointed end and a barbed end. Its length is defined by its flexible shoulder domain. The soulder is composed of 2 DCTN1 subunits, 4 DCTN2 and 2 DCTN3. The 4 DCNT2 (via N-terminus) bind the ACTR1A filament and act as molecular rulers to determine the length. The pointed end is important for binding dynein-dynactin cargo adapters. Consists of 4 subunits: ACTR10, DCNT4, DCTN5 and DCTN6. The barbed end is composed of a CAPZA1:CAPZB heterodimers, which binds ACTR1A/ACTB filament and dynactin and stabilizes dynactin. Interacts with ARHGAP17. Interaction with RCSD1/CAPZIP. Component of the WASH complex, composed of F-actin-capping protein subunit alpha (CAPZA1, CAPZA2 or CAPZA3), F-actin-capping protein subunit beta (CAPZB), WASH (WASHC1, WASH2P, WASH3P, WASH4P, WASH5P or WASH6P), WASHC2 (WASHC2A or WASHC2C), WASHC3, WASHC4 and WASHC5. Interacts with ACTG1. Directly interacts with CRACD; this interaction decreases binding to actin.

The protein resides in the cytoplasm. The protein localises to the cytoskeleton. It is found in the myofibril. Its subcellular location is the sarcomere. Its function is as follows. F-actin-capping proteins bind in a Ca(2+)-independent manner to the fast growing ends of actin filaments (barbed end) thereby blocking the exchange of subunits at these ends. Unlike other capping proteins (such as gelsolin and severin), these proteins do not sever actin filaments. Plays a role in the regulation of cell morphology and cytoskeletal organization. Forms, with CAPZB, the barbed end of the fast growing ends of actin filaments in the dynactin complex and stabilizes dynactin structure. The dynactin multiprotein complex activates the molecular motor dynein for ultra-processive transport along microtubules. The sequence is that of F-actin-capping protein subunit beta from Homo sapiens (Human).